The chain runs to 890 residues: Kinesin-like protein KIN-7C, mitochondrial (890 aa).

The span at 1–13 (MSATRSQRSSTIS) shows a compositional bias: polar residues. The disordered stretch occupies residues 1-66 (MSATRSQRSS…TSSAAASSTA (66 aa)). A mitochondrion-targeting transit peptide spans 1 to 73 (MSATRSQRSS…STAVASTKLK (73 aa)). A compositionally biased stretch (low complexity) spans 40-66 (SPVTSSSPLLRSSPSPSTSSAAASSTA). Positions 75–394 (NITVTIRFRP…LKFAQRCKHV (320 aa)) constitute a Kinesin motor domain. 155–162 (GVTSSGKT) is a binding site for ATP. Residues 395–468 (EIKASRNKIM…MGRIQRLTKL (74 aa)) adopt a coiled-coil conformation. The interval 511 to 595 (DGAVSTVSEH…TTRRENAAAI (85 aa)) is disordered. The span at 569 to 579 (SQASGSPSSSS) shows a compositional bias: low complexity. 2 coiled-coil regions span residues 664–693 (HIRD…IIEI) and 729–765 (ADNR…LAER). The segment at 768 to 797 (TQQIAGDESSGKNIHNRNGEESEIYSGAGT) is disordered. The stretch at 818-884 (NETALNSQAL…AEEVTRLCNE (67 aa)) forms a coiled coil.

Belongs to the TRAFAC class myosin-kinesin ATPase superfamily. Kinesin family. KIN-7 subfamily.

It localises to the mitochondrion. In Arabidopsis thaliana (Mouse-ear cress), this protein is Kinesin-like protein KIN-7C, mitochondrial.